The chain runs to 420 residues: Diphosphomevalonate decarboxylase 2 (420 aa).

Position 25-28 (25-28) interacts with (R)-5-diphosphomevalonate; the sequence is YWGK. The Peroxisomal targeting signal PTS2 motif lies at 42–50; it reads SVTLDPDHL. (R)-5-diphosphomevalonate is bound by residues arginine 80, 163 to 168, and threonine 219; that span reads SGSACR.

The protein belongs to the diphosphomevalonate decarboxylase family. As to quaternary structure, homodimer.

The protein resides in the peroxisome. The catalysed reaction is (R)-5-diphosphomevalonate + ATP = isopentenyl diphosphate + ADP + phosphate + CO2. Its pathway is isoprenoid biosynthesis; isopentenyl diphosphate biosynthesis via mevalonate pathway; isopentenyl diphosphate from (R)-mevalonate: step 3/3. Functionally, performs the first committed step in the biosynthesis of isoprene-containing compounds such as sterols and terpenoids. Component of the triterpenes (e.g. ginsenosides or panaxosides) and phytosterols biosynthetic pathways. Promotes the accumulation of stigmasterol and beta-sitosterol. In Panax ginseng (Korean ginseng), this protein is Diphosphomevalonate decarboxylase 2.